Here is a 151-residue protein sequence, read N- to C-terminus: Large ribosomal subunit protein bL9 (151 aa).

Belongs to the bacterial ribosomal protein bL9 family.

Binds to the 23S rRNA. The chain is Large ribosomal subunit protein bL9 from Francisella tularensis subsp. novicida (strain U112).